A 1148-amino-acid chain; its full sequence is Phospholipid-transporting ATPase IB (1148 aa).

Topologically, residues 1–54 are cytoplasmic; the sequence is MSRATSVGDQLDVPARTIYLNQPHLNKFCDNQISTAKYSVVTFLPRFLYEQIRR. Threonine 5 bears the Phosphothreonine mark. Residues 55–75 form a helical membrane-spanning segment; it reads AANAFFLFIALLQQIPDVSPT. At 76 to 79 the chain is on the exoplasmic loop side; it reads GRYT. Residues 80-100 form a helical membrane-spanning segment; the sequence is TLVPLIIILTIAGIKEIVEDF. The Cytoplasmic segment spans residues 101–276; the sequence is KRHKADNAVN…SNVEKVTNVQ (176 aa). A helical membrane pass occupies residues 277–297; sequence ILVLFGILLVMALVSSVGALY. The Exoplasmic loop segment spans residues 298-324; it reads WNGSQGGKNWYIKKMDATSDNFGYNLL. A helical transmembrane segment spans residues 325 to 345; it reads TFIILYNNLIPISLLVTLEVV. The Cytoplasmic portion of the chain corresponds to 346–847; sequence KYTQALFINW…CILYCFYKNV (502 aa). The active-site 4-aspartylphosphate intermediate is the aspartate 388. ATP-binding residues include aspartate 388, lysine 389, threonine 390, glutamate 488, phenylalanine 529, lysine 552, arginine 585, threonine 665, glycine 666, aspartate 667, arginine 755, and lysine 761. Mg(2+) is bound at residue aspartate 388. Threonine 390 contacts Mg(2+). Aspartate 781 is a binding site for Mg(2+). ATP is bound by residues asparagine 784 and aspartate 785. A Mg(2+)-binding site is contributed by aspartate 785. The helical transmembrane segment at 848 to 868 threads the bilayer; sequence VLYIIELWFAFVNGFSGQILF. Residues 869–870 lie on the Exoplasmic loop side of the membrane; sequence ER. A helical membrane pass occupies residues 871–891; sequence WCIGLYNVIFTALPPFTLGIF. The Cytoplasmic segment spans residues 892 to 919; sequence ERSCSQESMLRFPQLYKITQNAEGFNTK. A helical transmembrane segment spans residues 920 to 940; it reads VFWGHCINALVHSLILFWFPM. Over 941–957 the chain is Exoplasmic loop; it reads KALEHDTVLANGHATDY. Residues 958-978 form a helical membrane-spanning segment; it reads LFVGNIVYTYVVVTVCLKAGL. Topologically, residues 979–988 are cytoplasmic; sequence ETTAWTKFSH. A helical membrane pass occupies residues 989–1009; sequence LAVWGSMLIWLVFFGIYSTIW. At 1010-1023 the chain is on the exoplasmic loop side; it reads PTIPIAPDMKGQAT. A helical transmembrane segment spans residues 1024-1044; sequence MVLSSAHFWLGLFLVPTACLI. Topologically, residues 1045-1148 are cytoplasmic; the sequence is EDVAWRAAKH…DTTKQKSRKK (104 aa). The interval 1102 to 1126 is disordered; sequence PPTLFRGSSLQQSMPHGYAFSQEEH.

This sequence belongs to the cation transport ATPase (P-type) (TC 3.A.3) family. Type IV subfamily. As to quaternary structure, component of a P4-ATPase flippase complex which consists of a catalytic alpha subunit and an accessory beta subunit. Interacts with TMEM30A to form a flippase complex. Requires Mg(2+) as cofactor. Expressed in retinal photoreceptor cells and testis.

It localises to the membrane. It is found in the golgi apparatus membrane. Its subcellular location is the endosome membrane. The protein resides in the cell membrane. The protein localises to the photoreceptor outer segment membrane. It localises to the photoreceptor inner segment membrane. It carries out the reaction ATP + H2O + phospholipidSide 1 = ADP + phosphate + phospholipidSide 2.. It catalyses the reaction a 1,2-diacyl-sn-glycero-3-phospho-L-serine(out) + ATP + H2O = a 1,2-diacyl-sn-glycero-3-phospho-L-serine(in) + ADP + phosphate + H(+). The catalysed reaction is a 1,2-diacyl-sn-glycero-3-phosphoethanolamine(in) + ATP + H2O = a 1,2-diacyl-sn-glycero-3-phosphoethanolamine(out) + ADP + phosphate + H(+). ATPase activity is stimulated by phosphatidylserine (PS) and minimally by phosphatidylethanolamine (PE). ATPase activity is inhibited by N-ethylmaleimide (NEM) and vanadate. Flippase activity is inhibited by NEM and 1,2-dioleoyl-sn-glycero-3-phospho-L-serine (DOPS). Its function is as follows. Catalytic component of a P4-ATPase flippase complex which catalyzes the hydrolysis of ATP coupled to the transport of aminophospholipids from the outer to the inner leaflet of various membranes and ensures the maintenance of asymmetric distribution of phospholipids. Able to translocate phosphatidylserine, but not phosphatidylcholine. Phospholipid translocation seems also to be implicated in vesicle formation and in uptake of lipid signaling molecules. Reconstituted to liposomes, the ATP8A2:TMEM30A flippase complex predominantly transports phosphatidylserine (PS) and to a lesser extent phosphatidylethanolamine (PE). Phospholipid translocation is not associated with a countertransport of an inorganic ion or other charged substrate from the cytoplasmic side toward the exoplasm in connection with the phosphorylation from ATP. ATP8A2:TMEM30A may be involved in regulation of neurite outgrowth. Proposed to function in the generation and maintenance of phospholipid asymmetry in photoreceptor disk membranes and neuronal axon membranes. May be involved in vesicle trafficking in neuronal cells. Required for normal visual and auditory function; involved in photoreceptor and inner ear spiral ganglion cell survival. This Bos taurus (Bovine) protein is Phospholipid-transporting ATPase IB.